The primary structure comprises 292 residues: MPELPEVEVVRRGLQDHVVGKTMTAVRVHHPRAVRRHEAGPADLTARLLGARISGTDRRGKYLWLTLDAGAPTTGRDDPDAALVVHLGMSGQMLLGGVPRAEHVRISAVLDDGTVLSFADQRTFGGWQLADLVSVDGSVVPAPVAHLARDPLDPLFDVDSVIKVLRGKHSEVKRRLLDQQVVSGIGNIYADEALWRAKVHGARVAATLTRRQLGAVLDAAADVMREALAKGGTSFDSLYVNVNGQSGYFDRSLDAYGREGEHCRRCGAVMRREKFMNRSSFYCPRCQPRPRR.

The active-site Schiff-base intermediate with DNA is the Pro-2. The Proton donor role is filled by Glu-3. Catalysis depends on Lys-61, which acts as the Proton donor; for beta-elimination activity. Positions 103, 122, and 168 each coordinate DNA. Residues 254–288 (DAYGREGEHCRRCGAVMRREKFMNRSSFYCPRCQP) form an FPG-type zinc finger. Catalysis depends on Arg-278, which acts as the Proton donor; for delta-elimination activity.

It belongs to the FPG family. As to quaternary structure, monomer. It depends on Zn(2+) as a cofactor.

The catalysed reaction is Hydrolysis of DNA containing ring-opened 7-methylguanine residues, releasing 2,6-diamino-4-hydroxy-5-(N-methyl)formamidopyrimidine.. It carries out the reaction 2'-deoxyribonucleotide-(2'-deoxyribose 5'-phosphate)-2'-deoxyribonucleotide-DNA = a 3'-end 2'-deoxyribonucleotide-(2,3-dehydro-2,3-deoxyribose 5'-phosphate)-DNA + a 5'-end 5'-phospho-2'-deoxyribonucleoside-DNA + H(+). Functionally, involved in base excision repair of DNA damaged by oxidation or by mutagenic agents. Acts as a DNA glycosylase that recognizes and removes damaged bases. Has a preference for oxidized purines, such as 7,8-dihydro-8-oxoguanine (8-oxoG). Has AP (apurinic/apyrimidinic) lyase activity and introduces nicks in the DNA strand. Cleaves the DNA backbone by beta-delta elimination to generate a single-strand break at the site of the removed base with both 3'- and 5'-phosphates. The chain is Formamidopyrimidine-DNA glycosylase from Mycobacterium ulcerans (strain Agy99).